The chain runs to 180 residues: Adenine phosphoribosyltransferase (180 aa).

Belongs to the purine/pyrimidine phosphoribosyltransferase family. As to quaternary structure, homodimer.

It is found in the cytoplasm. The enzyme catalyses AMP + diphosphate = 5-phospho-alpha-D-ribose 1-diphosphate + adenine. Its pathway is purine metabolism; AMP biosynthesis via salvage pathway; AMP from adenine: step 1/1. Functionally, catalyzes a salvage reaction resulting in the formation of AMP, that is energically less costly than de novo synthesis. The sequence is that of Adenine phosphoribosyltransferase from Marinomonas sp. (strain MWYL1).